The chain runs to 553 residues: MLSVRVAAAVARALPRRAGLVSKNALGSSFVAARNLHASNTRLQKTGTAEVSSILEERILGADTSVDLEETGRVLSIGDGIARVHGLRNVQAEEMVEFSSGLKGMSLNLEPDNVGVVVFGNDKLIKEGDIVKRTGAIVDVPVGEELLGRVVDALGNAIDGKGPIGSKTRRRVGLKAPGIIPRISVREPMQTGIKAVDSLVPIGRGQRELIIGDRQTGKTSIAIDTIINQKRFNDGTDEKKKLYCIYVAIGQKRSTVAQLVKRLTDADAMKYTIVVSATASDAAPLQYLAPYSGCSMGEYFRDNGKHALIIYDDLSKQAVAYRQMSLLLRRPPGREAYPGDVFYLHSRLLERAAKMNDAFGGGSLTALPVIETQAGDVSAYIPTNVISITDGQIFLETELFYKGIRPAINVGLSVSRVGSAAQTRAMKQVAGTMKLELAQYREVAAFAQFGSDLDAATQQLLSRGVRLTELLKQGQYAPMAIEEQVAVIYAGVRGYLDKLEPSKITKFENAFLSHVISQHQALLGKIRADGKISEETDAKLKEIVTNFLAGFEA.

Residues 1-43 (MLSVRVAAAVARALPRRAGLVSKNALGSSFVAARNLHASNTRL) constitute a mitochondrion transit peptide. 2 positions are modified to phosphoserine: Ser53 and Ser65. Ser76 bears the Phosphoserine; alternate mark. A glycan (O-linked (GlcNAc) serine; alternate) is linked at Ser76. Phosphoserine is present on Ser106. N6-acetyllysine is present on residues Lys123, Lys126, and Lys132. Thr134 carries the phosphothreonine modification. An N6-acetyllysine; alternate modification is found at Lys161. N6-succinyllysine; alternate is present on Lys161. Ser166 carries the post-translational modification Phosphoserine. Lys167 carries the post-translational modification N6-acetyllysine; alternate. The residue at position 167 (Lys167) is an N6-succinyllysine; alternate. Phosphoserine is present on Ser184. Arg204 is subject to Omega-N-methylarginine. ATP contacts are provided by Gln215, Gly217, Lys218, Thr219, and Ser220. Thr219 lines the Mg(2+) pocket. Residues Lys230 and Lys239 each carry the N6-acetyllysine; alternate modification. 2 positions are modified to N6-succinyllysine; alternate: Lys230 and Lys239. Lys240 bears the N6-acetyllysine mark. N6-acetyllysine; alternate occurs at positions 261 and 305. An N6-succinyllysine; alternate mark is found at Lys261 and Lys305. Asp312 is a binding site for Mg(2+). Lys427 is subject to N6-acetyllysine; alternate. Lys427 carries the N6-succinyllysine; alternate modification. At Lys434 the chain carries N6-acetyllysine. Positions 473 and 475 each coordinate ATP. Lys498, Lys506, Lys531, and Lys539 each carry N6-acetyllysine; alternate. Lys498, Lys506, Lys531, and Lys539 each carry N6-succinyllysine; alternate. Lys541 carries the N6-acetyllysine modification.

This sequence belongs to the ATPase alpha/beta chains family. Homotrimer. Component of the ATP synthase complex composed at least of ATP5F1A/subunit alpha, ATP5F1B/subunit beta, ATP5MC1/subunit c (homooctomer), MT-ATP6/subunit a, MT-ATP8/subunit 8, ATP5ME/subunit e, ATP5MF/subunit f, ATP5MG/subunit g, ATP5MK/subunit k, ATP5MJ/subunit j, ATP5F1C/subunit gamma, ATP5F1D/subunit delta, ATP5F1E/subunit epsilon, ATP5PF/subunit F6, ATP5PB/subunit b, ATP5PD/subunit d, ATP5PO/subunit OSCP. ATP synthase complex consists of a soluble F(1) head domain (subunits alpha(3) and beta(3)) - the catalytic core - and a membrane F(0) domain - the membrane proton channel (subunits c, a, 8, e, f, g, k and j). These two domains are linked by a central stalk (subunits gamma, delta, and epsilon) rotating inside the F1 region and a stationary peripheral stalk (subunits F6, b, d, and OSCP). Interacts with ATPAF2. Interacts with HRG; the interaction occurs on the surface of T-cells and alters the cell morphology when associated with concanavalin (in vitro). Interacts with PLG (angiostatin peptide); the interaction inhibits most of the angiogenic properties of angiostatin. Interacts with BLOC1S1. Interacts with BCL2L1 isoform BCL-X(L); the interaction mediates the association of BCL2L1 isoform BCL-X(L) with the mitochondrial membrane F(1)F(0) ATP synthase and enhances neurons metabolic efficiency. Interacts with CLN5 and PPT1. Interacts with S100A1; this interaction increases F1-ATPase activity. Interacts with ABCB7; this interaction allows the regulation of cellular iron homeostasis and cellular reactive oxygen species (ROS) levels in cardiomyocytes. In terms of processing, acetylated on lysine residues. BLOC1S1 is required for acetylation. In terms of tissue distribution, expressed in heart (at protein level).

The protein localises to the mitochondrion. The protein resides in the mitochondrion inner membrane. It is found in the cell membrane. In terms of biological role, subunit alpha, of the mitochondrial membrane ATP synthase complex (F(1)F(0) ATP synthase or Complex V) that produces ATP from ADP in the presence of a proton gradient across the membrane which is generated by electron transport complexes of the respiratory chain. ATP synthase complex consist of a soluble F(1) head domain - the catalytic core - and a membrane F(1) domain - the membrane proton channel. These two domains are linked by a central stalk rotating inside the F(1) region and a stationary peripheral stalk. During catalysis, ATP synthesis in the catalytic domain of F(1) is coupled via a rotary mechanism of the central stalk subunits to proton translocation. In vivo, can only synthesize ATP although its ATP hydrolase activity can be activated artificially in vitro. With the catalytic subunit beta (ATP5F1B), forms the catalytic core in the F(1) domain. Subunit alpha does not bear the catalytic high-affinity ATP-binding sites. The chain is ATP synthase F(1) complex subunit alpha, mitochondrial from Sus scrofa (Pig).